We begin with the raw amino-acid sequence, 199 residues long: Small ribosomal subunit protein eS1 (199 aa).

This sequence belongs to the eukaryotic ribosomal protein eS1 family.

The chain is Small ribosomal subunit protein eS1 from Pyrococcus horikoshii (strain ATCC 700860 / DSM 12428 / JCM 9974 / NBRC 100139 / OT-3).